Consider the following 260-residue polypeptide: 1-(5-phosphoribosyl)-5-[(5-phosphoribosylamino)methylideneamino] imidazole-4-carboxamide isomerase (260 aa).

Asp8 serves as the catalytic Proton acceptor. Residue Asp130 is the Proton donor of the active site.

The protein belongs to the HisA/HisF family.

The protein resides in the cytoplasm. It catalyses the reaction 1-(5-phospho-beta-D-ribosyl)-5-[(5-phospho-beta-D-ribosylamino)methylideneamino]imidazole-4-carboxamide = 5-[(5-phospho-1-deoxy-D-ribulos-1-ylimino)methylamino]-1-(5-phospho-beta-D-ribosyl)imidazole-4-carboxamide. It participates in amino-acid biosynthesis; L-histidine biosynthesis; L-histidine from 5-phospho-alpha-D-ribose 1-diphosphate: step 4/9. This chain is 1-(5-phosphoribosyl)-5-[(5-phosphoribosylamino)methylideneamino] imidazole-4-carboxamide isomerase, found in Chlorobium phaeobacteroides (strain BS1).